The chain runs to 315 residues: MKTRKVVLIGCGAVGTSFLYSALNQGLFDEYVLIDAFDNLSKGNAWDFEDANAIMSTPAGMIKSGTYEDCADADVVVITAGVPQKPGGETRLQLVGRNAKIMEEIATNVKDSGFDGITVIASNPVDIMGSVYAKVTGFEPNKVIPSGTILDSARLQWEVAKRIKINPASLEVYVVGEHGDSSVSVFSQASVGSIPLSKYRKFSDSQKRAIHKDVMRKAYKIINTKRATFYGIGACLARICKAVLRDENVILPVSIKKNADSDIYIGWPAVVGKDGWHSPLKLTLLAEEKRGFQKSYNSLKKVFEVTWSELGRSEY.

Residues valine 14, aspartate 35, tyrosine 67, and 81-82 (GV) contribute to the NAD(+) site. Substrate is bound by residues glutamine 84, arginine 91, and 123–126 (NPVD). NAD(+) is bound by residues 121 to 123 (ASN) and serine 146. Residue 151–154 (DSAR) coordinates substrate. The Proton acceptor role is filled by histidine 178. At tyrosine 219 the chain carries Phosphotyrosine. Threonine 228 contributes to the substrate binding site.

It belongs to the LDH/MDH superfamily. LDH family. In terms of assembly, homotetramer.

The protein localises to the cytoplasm. The catalysed reaction is (S)-lactate + NAD(+) = pyruvate + NADH + H(+). It participates in fermentation; pyruvate fermentation to lactate; (S)-lactate from pyruvate: step 1/1. Catalyzes the conversion of lactate to pyruvate. The protein is L-lactate dehydrogenase of Malacoplasma penetrans (strain HF-2) (Mycoplasma penetrans).